A 369-amino-acid polypeptide reads, in one-letter code: Phospho-N-acetylmuramoyl-pentapeptide-transferase (369 aa).

Transmembrane regions (helical) follow at residues Ala30–Leu50, Leu73–Ala93, Tyr99–Tyr119, Val140–Leu160, Leu171–Ser191, Gly202–Thr222, Gly239–Phe259, Ile266–Leu286, Leu291–Val311, and Lys346–Leu366.

It belongs to the glycosyltransferase 4 family. MraY subfamily. Mg(2+) serves as cofactor.

The protein localises to the cell inner membrane. It catalyses the reaction UDP-N-acetyl-alpha-D-muramoyl-L-alanyl-gamma-D-glutamyl-meso-2,6-diaminopimeloyl-D-alanyl-D-alanine + di-trans,octa-cis-undecaprenyl phosphate = di-trans,octa-cis-undecaprenyl diphospho-N-acetyl-alpha-D-muramoyl-L-alanyl-D-glutamyl-meso-2,6-diaminopimeloyl-D-alanyl-D-alanine + UMP. It functions in the pathway cell wall biogenesis; peptidoglycan biosynthesis. Catalyzes the initial step of the lipid cycle reactions in the biosynthesis of the cell wall peptidoglycan: transfers peptidoglycan precursor phospho-MurNAc-pentapeptide from UDP-MurNAc-pentapeptide onto the lipid carrier undecaprenyl phosphate, yielding undecaprenyl-pyrophosphoryl-MurNAc-pentapeptide, known as lipid I. This is Phospho-N-acetylmuramoyl-pentapeptide-transferase from Chlorobium phaeobacteroides (strain BS1).